Reading from the N-terminus, the 389-residue chain is Putative cyclin-F3-1 (389 aa).

The interval 1-103 is disordered; sequence MEAAAAAAAE…GAAGGSRQPV (103 aa). Residues 19-43 show a composition bias toward low complexity; that stretch reads VEGAAVAAVAPEAAAEGPSEPNAGE.

Belongs to the cyclin family. Cyclin F subfamily.

The sequence is that of Putative cyclin-F3-1 (CYCF3-1) from Oryza sativa subsp. japonica (Rice).